We begin with the raw amino-acid sequence, 340 residues long: Beta-ketoacyl-[acyl-carrier-protein] synthase III (340 aa).

Active-site residues include C122 and H260. Positions 261–265 (QANTR) are ACP-binding. The active site involves N291.

The protein belongs to the thiolase-like superfamily. FabH family. In terms of assembly, homodimer.

Its subcellular location is the cytoplasm. It carries out the reaction malonyl-[ACP] + acetyl-CoA + H(+) = 3-oxobutanoyl-[ACP] + CO2 + CoA. The protein operates within lipid metabolism; fatty acid biosynthesis. In terms of biological role, catalyzes the condensation reaction of fatty acid synthesis by the addition to an acyl acceptor of two carbons from malonyl-ACP. Catalyzes the first condensation reaction which initiates fatty acid synthesis and may therefore play a role in governing the total rate of fatty acid production. Possesses both acetoacetyl-ACP synthase and acetyl transacylase activities. Its substrate specificity determines the biosynthesis of branched-chain and/or straight-chain of fatty acids. The chain is Beta-ketoacyl-[acyl-carrier-protein] synthase III from Mycobacteroides abscessus (strain ATCC 19977 / DSM 44196 / CCUG 20993 / CIP 104536 / JCM 13569 / NCTC 13031 / TMC 1543 / L948) (Mycobacterium abscessus).